The primary structure comprises 700 residues: Putative cysteine-rich receptor-like protein kinase 30 (700 aa).

The N-terminal stretch at 1–24 is a signal peptide; sequence MRQNNLFSLIFWLVPVSLIIVVSA. 2 consecutive Gnk2-homologous domains span residues 25-129 and 135-250; these read QLCS…NQPS and LESV…LYPF. Residues 25-285 lie on the Extracellular side of the membrane; it reads QLCSEKFGTF…KDEKTIHTGT (261 aa). Asparagine 63, asparagine 105, asparagine 146, asparagine 150, and asparagine 191 each carry an N-linked (GlcNAc...) asparagine glycan. The chain crosses the membrane as a helical span at residues 286–306; sequence IIGIVIVVAMVIIMALLALGV. Over 307-700 the chain is Cytoplasmic; sequence SVCRSRKKYQ…SKSMYRNTED (394 aa). The Protein kinase domain maps to 346 to 626; that stretch reads FLASNKIGQG…IFQMLTNSSI (281 aa). ATP-binding positions include 352–360 and lysine 374; that span reads IGQGGFGEV. The active-site Proton acceptor is aspartate 474. Phosphoserine is present on serine 478. A Phosphothreonine modification is found at threonine 514. Tyrosine 522 bears the Phosphotyrosine mark.

Belongs to the protein kinase superfamily. Ser/Thr protein kinase family. CRK subfamily.

It localises to the membrane. It catalyses the reaction L-seryl-[protein] + ATP = O-phospho-L-seryl-[protein] + ADP + H(+). The catalysed reaction is L-threonyl-[protein] + ATP = O-phospho-L-threonyl-[protein] + ADP + H(+). The polypeptide is Putative cysteine-rich receptor-like protein kinase 30 (CRK30) (Arabidopsis thaliana (Mouse-ear cress)).